Reading from the N-terminus, the 237-residue chain is Orotidine 5'-phosphate decarboxylase (237 aa).

Residues D17, K39, 66–75 (DLKLHDIGNT), T121, R182, Q191, G211, and R212 each bind substrate. The active-site Proton donor is K68.

This sequence belongs to the OMP decarboxylase family. Type 1 subfamily. As to quaternary structure, homodimer.

The enzyme catalyses orotidine 5'-phosphate + H(+) = UMP + CO2. The protein operates within pyrimidine metabolism; UMP biosynthesis via de novo pathway; UMP from orotate: step 2/2. In terms of biological role, catalyzes the decarboxylation of orotidine 5'-monophosphate (OMP) to uridine 5'-monophosphate (UMP). The chain is Orotidine 5'-phosphate decarboxylase from Rhodopseudomonas palustris (strain TIE-1).